An 838-amino-acid chain; its full sequence is Protein translocase subunit SecA (838 aa).

ATP contacts are provided by residues glutamine 86, 104-108, and aspartate 493; that span reads GEGKT. Positions 793-838 are disordered; that stretch reads NTQAVSGGEDSGKKKTKKPVVKSNTVKRNDPCPCGSGKKYKNCHGQ. Residues cysteine 824, cysteine 826, cysteine 835, and histidine 836 each coordinate Zn(2+).

Belongs to the SecA family. Monomer and homodimer. Part of the essential Sec protein translocation apparatus which comprises SecA, SecYEG and auxiliary proteins SecDF. Other proteins may also be involved. Requires Zn(2+) as cofactor.

It localises to the cell membrane. It is found in the cytoplasm. It carries out the reaction ATP + H2O + cellular proteinSide 1 = ADP + phosphate + cellular proteinSide 2.. Functionally, part of the Sec protein translocase complex. Interacts with the SecYEG preprotein conducting channel. Has a central role in coupling the hydrolysis of ATP to the transfer of proteins into and across the cell membrane, serving as an ATP-driven molecular motor driving the stepwise translocation of polypeptide chains across the membrane. The sequence is that of Protein translocase subunit SecA from Oceanobacillus iheyensis (strain DSM 14371 / CIP 107618 / JCM 11309 / KCTC 3954 / HTE831).